A 310-amino-acid polypeptide reads, in one-letter code: Homoserine kinase (310 aa).

91–101 (PIGSGLGSSAC) is an ATP binding site.

Belongs to the GHMP kinase family. Homoserine kinase subfamily.

Its subcellular location is the cytoplasm. The enzyme catalyses L-homoserine + ATP = O-phospho-L-homoserine + ADP + H(+). It functions in the pathway amino-acid biosynthesis; L-threonine biosynthesis; L-threonine from L-aspartate: step 4/5. Functionally, catalyzes the ATP-dependent phosphorylation of L-homoserine to L-homoserine phosphate. This is Homoserine kinase from Escherichia coli (strain SMS-3-5 / SECEC).